A 208-amino-acid chain; its full sequence is Type 3 secretion system stator protein (208 aa).

It belongs to the SctL stator family. The core secretion machinery of the T3SS is composed of approximately 20 different proteins, including cytoplasmic components, a base, an export apparatus and a needle. This subunit is part of the cytosolic complex.

Its subcellular location is the cytoplasm. In terms of biological role, component of the type III secretion system (T3SS), also called injectisome, which is used to inject bacterial effector proteins into eukaryotic host cells. Acts as a regulator of the HrcN/SctN ATPase activity. This chain is Type 3 secretion system stator protein, found in Sinorhizobium fredii (strain NBRC 101917 / NGR234).